The chain runs to 256 residues: Nuclear shuttle protein (256 aa).

A compositionally biased stretch (polar residues) spans 1–16 (MYSTSNRRGRSQTQRG). Residues 1–46 (MYSTSNRRGRSQTQRGSHVRRTGVKRSYGAARGDDRRRPNVVSKTQ) are disordered. Positions 21–42 (RTGVKRSYGAARGDDRRRPNVV) match the Bipartite nuclear localization signal motif. Positions 81-96 (SYVKTVPNRTRTYIKL) match the Nuclear localization signal motif. The tract at residues 150 to 187 (ELFGARIHCHGNLSVVPALKDRYYIRHVTKRVVSLEKD) is interaction with Arabidopsis thaliana NSI protein. The Nuclear export signal motif lies at 177 to 198 (VTKRVVSLEKDTLLIDLHGTTQ).

Belongs to the begomovirus nuclear shuttle protein family. In terms of assembly, binds to single-stranded and double-stranded viral DNA. Interacts with the host nuclear shuttle interacting (NSI) protein. This interaction may allow NSP to recruit NSI monomers to the viral genome and thus regulate nuclear export of viral genome by NSP.

The protein localises to the host nucleus. It is found in the host cytoplasm. Its subcellular location is the host cell membrane. Binds to the genomic viral ssDNA, shuttles it into and out of the cell nucleus. Begomoviruses use 2 proteins to transport their DNA from cell to cell. The nuclear shuttle protein (NSP) shuttles it between nucleus and cytoplasm and the movement protein (MP) probably transports the DNA-NSP complex to the cell periphery and facilitates movement across the cell wall. This Squash leaf curl virus (SLCV) protein is Nuclear shuttle protein.